Here is a 326-residue protein sequence, read N- to C-terminus: UDP-3-O-acylglucosamine N-acyltransferase (326 aa).

The Proton acceptor role is filled by His-233.

The protein belongs to the transferase hexapeptide repeat family. LpxD subfamily. As to quaternary structure, homotrimer.

The enzyme catalyses a UDP-3-O-[(3R)-3-hydroxyacyl]-alpha-D-glucosamine + a (3R)-hydroxyacyl-[ACP] = a UDP-2-N,3-O-bis[(3R)-3-hydroxyacyl]-alpha-D-glucosamine + holo-[ACP] + H(+). It functions in the pathway bacterial outer membrane biogenesis; LPS lipid A biosynthesis. In terms of biological role, catalyzes the N-acylation of UDP-3-O-acylglucosamine using 3-hydroxyacyl-ACP as the acyl donor. Is involved in the biosynthesis of lipid A, a phosphorylated glycolipid that anchors the lipopolysaccharide to the outer membrane of the cell. This Aquifex aeolicus (strain VF5) protein is UDP-3-O-acylglucosamine N-acyltransferase.